The primary structure comprises 154 residues: MRKKKTEVYALRRHISLSADKARRVIDQIRGRSYEETLMILELMPYRACSPISKLVYSAAANANSNMGSNKANLVISNAEVNEGTTRKKFKPRARGHCYPIKRRTCHITIGVKDISLDDEYEQIYSLKKPRWKNKYTTMIYHDIDSIGRVWDKK.

The protein belongs to the universal ribosomal protein uL22 family. As to quaternary structure, part of the 50S ribosomal subunit.

Its subcellular location is the plastid. It is found in the chloroplast. In terms of biological role, this protein binds specifically to 23S rRNA. Its function is as follows. The globular domain of the protein is located near the polypeptide exit tunnel on the outside of the subunit, while an extended beta-hairpin is found that lines the wall of the exit tunnel in the center of the 70S ribosome. The sequence is that of Large ribosomal subunit protein uL22c (rpl22) from Jasminum nudiflorum (Winter jasmine).